Here is a 407-residue protein sequence, read N- to C-terminus: Arginine deiminase (407 aa).

The Amidino-cysteine intermediate role is filled by Cys-397.

It belongs to the arginine deiminase family.

It is found in the cytoplasm. It catalyses the reaction L-arginine + H2O = L-citrulline + NH4(+). The protein operates within amino-acid degradation; L-arginine degradation via ADI pathway; carbamoyl phosphate from L-arginine: step 1/2. The chain is Arginine deiminase from Salmonella arizonae (strain ATCC BAA-731 / CDC346-86 / RSK2980).